A 75-amino-acid polypeptide reads, in one-letter code: uncharacterized protein (75 aa).

An N-terminal signal peptide occupies residues 1 to 18; the sequence is MRKYLSARSMCCSFFSCA.

This is an uncharacterized protein from Treponema pallidum (strain Nichols).